The following is a 344-amino-acid chain: uncharacterized protein (344 aa).

Residues 221-249 adopt a coiled-coil conformation; sequence IQAQSMDEQKQIQEIYQNVEKLKEDVTKN.

Belongs to the IIV-6 287R family.

This is an uncharacterized protein from Aedes vexans (Inland floodwater mosquito).